Consider the following 622-residue polypeptide: Elongation factor 4 (622 aa).

Positions 17–198 constitute a tr-type G domain; the sequence is ELLRNFCIIA…QIVRQIPAPV (182 aa). Residues 29–34 and 145–148 each bind GTP; these read DHGKST and NKID.

This sequence belongs to the TRAFAC class translation factor GTPase superfamily. Classic translation factor GTPase family. LepA subfamily.

Its subcellular location is the cell membrane. The catalysed reaction is GTP + H2O = GDP + phosphate + H(+). In terms of biological role, required for accurate and efficient protein synthesis under certain stress conditions. May act as a fidelity factor of the translation reaction, by catalyzing a one-codon backward translocation of tRNAs on improperly translocated ribosomes. Back-translocation proceeds from a post-translocation (POST) complex to a pre-translocation (PRE) complex, thus giving elongation factor G a second chance to translocate the tRNAs correctly. Binds to ribosomes in a GTP-dependent manner. The sequence is that of Elongation factor 4 from Kineococcus radiotolerans (strain ATCC BAA-149 / DSM 14245 / SRS30216).